The chain runs to 553 residues: Chaperonin GroEL (553 aa).

Residues 30-33 (TLGP), Lys51, 87-91 (DGTTT), Gly416, and Asp496 each bind ATP.

This sequence belongs to the chaperonin (HSP60) family. In terms of assembly, forms a cylinder of 14 subunits composed of two heptameric rings stacked back-to-back. Interacts with the co-chaperonin GroES.

Its subcellular location is the cytoplasm. The enzyme catalyses ATP + H2O + a folded polypeptide = ADP + phosphate + an unfolded polypeptide.. Functionally, together with its co-chaperonin GroES, plays an essential role in assisting protein folding. The GroEL-GroES system forms a nano-cage that allows encapsulation of the non-native substrate proteins and provides a physical environment optimized to promote and accelerate protein folding. The sequence is that of Chaperonin GroEL from Alkalilimnicola ehrlichii (strain ATCC BAA-1101 / DSM 17681 / MLHE-1).